The chain runs to 123 residues: Late histone H2B.L1 (123 aa).

The span at 1-10 (MPAKAQPAGK) shows a compositional bias: low complexity. The segment at 1 to 33 (MPAKAQPAGKKGSKKAKAPRPSGGKKRRRRRKE) is disordered. The span at 11 to 32 (KGSKKAKAPRPSGGKKRRRRRK) shows a compositional bias: basic residues. Ser110 is a glycosylation site (O-linked (GlcNAc) serine). Lys118 is covalently cross-linked (Glycyl lysine isopeptide (Lys-Gly) (interchain with G-Cter in ubiquitin)).

The protein belongs to the histone H2B family. The nucleosome is a histone octamer containing two molecules each of H2A, H2B, H3 and H4 assembled in one H3-H4 heterotetramer and two H2A-H2B heterodimers. The octamer wraps approximately 147 bp of DNA. In terms of processing, monoubiquitination of Lys-118 gives a specific tag for epigenetic transcriptional activation and is also prerequisite for histone H3 'Lys-4' and 'Lys-79' methylation. Post-translationally, glcNAcylation at Ser-110 promotes monoubiquitination of Lys-118. It fluctuates in response to extracellular glucose, and associates with transcribed genes.

It localises to the nucleus. The protein resides in the chromosome. In terms of biological role, core component of nucleosome. Nucleosomes wrap and compact DNA into chromatin, limiting DNA accessibility to the cellular machineries which require DNA as a template. Histones thereby play a central role in transcription regulation, DNA repair, DNA replication and chromosomal stability. DNA accessibility is regulated via a complex set of post-translational modifications of histones, also called histone code, and nucleosome remodeling. This chain is Late histone H2B.L1, found in Strongylocentrotus purpuratus (Purple sea urchin).